Reading from the N-terminus, the 997-residue chain is Disease resistance protein RML1A (997 aa).

Residues 12–176 (WRYRVFTSFH…KIARDVSEKL (165 aa)) enclose the TIR domain. The active site involves E87. Residues 191 to 447 (EAHLRKIQSL…HIAIFFNYED (257 aa)) enclose the NB-ARC domain. LRR repeat units lie at residues 194 to 218 (LRKI…GPAG), 534 to 557 (TSGI…RFLS), 600 to 623 (AENL…TQLL), 624 to 647 (TKLK…SNAT), 649 to 670 (LEML…IKNL), 671 to 693 (HKLD…NINL), 694 to 714 (ASLE…PAFS), 715 to 737 (TKIK…ITHC), 758 to 781 (PSSL…CIKD), and 783 to 808 (QRLD…SLRL).

It carries out the reaction NAD(+) + H2O = ADP-D-ribose + nicotinamide + H(+). In terms of biological role, TIR-NB-LRR receptor-like protein that confers resistance to the pathogen Leptosphaeria maculans (blackleg disease). The chain is Disease resistance protein RML1A from Arabidopsis thaliana (Mouse-ear cress).